A 397-amino-acid polypeptide reads, in one-letter code: tRNA-specific 2-thiouridylase MnmA (397 aa).

ATP is bound by residues 19-26 (AMSGGVDS) and L45. The active-site Nucleophile is C113. C113 and C210 are disulfide-bonded. Residue G137 coordinates ATP. Residues 160–162 (RDQ) are interaction with tRNA. The active-site Cysteine persulfide intermediate is C210.

It belongs to the MnmA/TRMU family.

The protein localises to the cytoplasm. The catalysed reaction is S-sulfanyl-L-cysteinyl-[protein] + uridine(34) in tRNA + AH2 + ATP = 2-thiouridine(34) in tRNA + L-cysteinyl-[protein] + A + AMP + diphosphate + H(+). Functionally, catalyzes the 2-thiolation of uridine at the wobble position (U34) of tRNA, leading to the formation of s(2)U34. The chain is tRNA-specific 2-thiouridylase MnmA from Bradyrhizobium sp. (strain ORS 278).